We begin with the raw amino-acid sequence, 229 residues long: Potassium/proton antiporter CemA (229 aa).

The next 3 helical transmembrane spans lie at 7-27, 107-127, and 189-209; these read FTPLFYLASIVFLPWWISFSV, ILHFSTNIICFIILSGYSILG, and IISGLVSTFPVILDTIFKYWI.

This sequence belongs to the CemA family.

It localises to the plastid. Its subcellular location is the chloroplast inner membrane. The enzyme catalyses K(+)(in) + H(+)(out) = K(+)(out) + H(+)(in). Functionally, contributes to K(+)/H(+) antiport activity by supporting proton efflux to control proton extrusion and homeostasis in chloroplasts in a light-dependent manner to modulate photosynthesis. Prevents excessive induction of non-photochemical quenching (NPQ) under continuous-light conditions. Indirectly promotes efficient inorganic carbon uptake into chloroplasts. The chain is Potassium/proton antiporter CemA from Nicotiana tomentosiformis (Tobacco).